We begin with the raw amino-acid sequence, 531 residues long: Histone-arginine methyltransferase CARMER (531 aa).

Positions 141-450 constitute an SAM-dependent MTase PRMT-type domain; the sequence is ASQYFQFYGY…QSYDVTIDLH (310 aa). Gln-154, Arg-163, Gly-187, Glu-209, Glu-238, and Thr-266 together coordinate S-adenosyl-L-methionine. An Asymmetric dimethylarginine; by autocatalysis modification is found at Arg-501.

It belongs to the class I-like SAM-binding methyltransferase superfamily. Protein arginine N-methyltransferase family. In terms of assembly, homodimer. Post-translationally, the dimethylated protein is the major form.

The protein resides in the cytoplasm. It localises to the nucleus. It catalyses the reaction L-arginyl-[protein] + 2 S-adenosyl-L-methionine = N(omega),N(omega)-dimethyl-L-arginyl-[protein] + 2 S-adenosyl-L-homocysteine + 2 H(+). Methylates (mono- and asymmetric dimethylation) the guanidino nitrogens of arginyl residues in proteins. May methylate histone H3 at 'Arg-17' and activate transcription via chromatin remodeling. In Drosophila ananassae (Fruit fly), this protein is Histone-arginine methyltransferase CARMER (Art4).